The following is a 240-amino-acid chain: Small ribosomal subunit protein uS3 (240 aa).

A KH type-2 domain is found at 39-109 (IRQYIEKTLN…QIRVNVIEVP (71 aa)). The segment at 219 to 240 (APPSQPRRKSRRQQFDDRSQDG) is disordered. Residues 231–240 (QQFDDRSQDG) show a composition bias toward basic and acidic residues.

The protein belongs to the universal ribosomal protein uS3 family. In terms of assembly, part of the 30S ribosomal subunit. Forms a tight complex with proteins S10 and S14.

In terms of biological role, binds the lower part of the 30S subunit head. Binds mRNA in the 70S ribosome, positioning it for translation. The protein is Small ribosomal subunit protein uS3 of Synechocystis sp. (strain ATCC 27184 / PCC 6803 / Kazusa).